Consider the following 179-residue polypeptide: Ubiquinol-cytochrome c reductase iron-sulfur subunit (179 aa).

Residues 14 to 35 (FLYVATAAVGAAGVAAVAWPFI) traverse the membrane as a helical segment. Residues 80 to 173 (AKEIQSEEAA…YEFVDNTKIR (94 aa)) enclose the Rieske domain. Residues Cys-118, His-120, Cys-137, and His-140 each contribute to the [2Fe-2S] cluster site. Cysteines 123 and 139 form a disulfide.

Belongs to the Rieske iron-sulfur protein family. The main subunits of complex b-c1 are: cytochrome b, cytochrome c1 and the Rieske protein. [2Fe-2S] cluster is required as a cofactor.

The protein localises to the cell membrane. The catalysed reaction is a quinol + 2 Fe(III)-[cytochrome c](out) = a quinone + 2 Fe(II)-[cytochrome c](out) + 2 H(+)(out). In terms of biological role, component of the ubiquinol-cytochrome c reductase complex (complex III or cytochrome b-c1 complex), which is a respiratory chain that generates an electrochemical potential coupled to ATP synthesis. The sequence is that of Ubiquinol-cytochrome c reductase iron-sulfur subunit (petA) from Blastochloris viridis (Rhodopseudomonas viridis).